We begin with the raw amino-acid sequence, 137 residues long: Large-conductance mechanosensitive channel (137 aa).

2 consecutive transmembrane segments (helical) span residues Phe-10 to Gly-30 and Gly-76 to Ile-96.

Belongs to the MscL family. Homopentamer.

It localises to the cell inner membrane. In terms of biological role, channel that opens in response to stretch forces in the membrane lipid bilayer. May participate in the regulation of osmotic pressure changes within the cell. This Salmonella typhimurium (strain LT2 / SGSC1412 / ATCC 700720) protein is Large-conductance mechanosensitive channel.